A 477-amino-acid chain; its full sequence is Glutamate--tRNA ligase 1 (477 aa).

The 'HIGH' region signature appears at 12-22; the sequence is PSPTGALHLGN. Positions 253-257 match the 'KMSKS' region motif; the sequence is PLSKR. Lysine 256 is an ATP binding site.

It belongs to the class-I aminoacyl-tRNA synthetase family. Glutamate--tRNA ligase type 1 subfamily. In terms of assembly, monomer.

The protein resides in the cytoplasm. The catalysed reaction is tRNA(Glu) + L-glutamate + ATP = L-glutamyl-tRNA(Glu) + AMP + diphosphate. Catalyzes the attachment of glutamate to tRNA(Glu) in a two-step reaction: glutamate is first activated by ATP to form Glu-AMP and then transferred to the acceptor end of tRNA(Glu). The polypeptide is Glutamate--tRNA ligase 1 (Halorhodospira halophila (strain DSM 244 / SL1) (Ectothiorhodospira halophila (strain DSM 244 / SL1))).